We begin with the raw amino-acid sequence, 522 residues long: Glucose-1-phosphate adenylyltransferase large subunit, chloroplastic/amyloplastic (522 aa).

The N-terminal 62 residues, 1-62 (MSSMQFSSVL…RGPAATGAQC (62 aa)), are a transit peptide targeting the chloroplast. Over residues 28-42 (SERLKVGDSSSIRHE) the composition is skewed to basic and acidic residues. The tract at residues 28-54 (SERLKVGDSSSIRHERASRRMCNGGRG) is disordered.

Belongs to the bacterial/plant glucose-1-phosphate adenylyltransferase family. In terms of assembly, heterotetramer. In terms of tissue distribution, abundantly expressed in the whole grains, a slightly less abundant expression is seen in leaves, while a low level expression is seen in the roots. A greater expression is seen in the endosperm than in the embryo and pericarp layers.

The protein localises to the plastid. It localises to the chloroplast. The protein resides in the amyloplast. It carries out the reaction alpha-D-glucose 1-phosphate + ATP + H(+) = ADP-alpha-D-glucose + diphosphate. It functions in the pathway glycan biosynthesis; starch biosynthesis. Its activity is regulated as follows. Insensitive to 3'phosphoglycerate and orthophosphate. Functionally, this protein plays a role in synthesis of starch. It catalyzes the synthesis of the activated glycosyl donor, ADP-glucose from Glc-1-P and ATP. The chain is Glucose-1-phosphate adenylyltransferase large subunit, chloroplastic/amyloplastic (AGP-L) from Triticum aestivum (Wheat).